We begin with the raw amino-acid sequence, 349 residues long: Phosphoribosylformylglycinamidine cyclo-ligase (349 aa).

This sequence belongs to the AIR synthase family.

Its subcellular location is the cytoplasm. The enzyme catalyses 2-formamido-N(1)-(5-O-phospho-beta-D-ribosyl)acetamidine + ATP = 5-amino-1-(5-phospho-beta-D-ribosyl)imidazole + ADP + phosphate + H(+). The protein operates within purine metabolism; IMP biosynthesis via de novo pathway; 5-amino-1-(5-phospho-D-ribosyl)imidazole from N(2)-formyl-N(1)-(5-phospho-D-ribosyl)glycinamide: step 2/2. The chain is Phosphoribosylformylglycinamidine cyclo-ligase from Listeria monocytogenes serotype 4a (strain HCC23).